Consider the following 280-residue polypeptide: Keratin, type I cytoskeletal 47 kDa (280 aa).

A head region spans residues 1–81; it reads MSFRSSSSYS…SSSFSSFGGN (81 aa). The tract at residues 82-117 is coil 1A; that stretch reads DKQTMQNLNDRLASYLEKVRALEAANADLELKIREW. The IF rod domain occupies 82 to 280; that stretch reads DKQTMQNLND…RDAELWFNQK (199 aa). Residues 118-139 are linker 1; it reads YEKQKGSGIGAASKDFSKYFEI. Positions 140–231 are coil 1B; sequence ISDLRNKILF…KNHEEEMSIA (92 aa). A linker 12 region spans residues 232–254; sequence KGSAAGQVTVEMDAAPGVDLNKI. The coil 2 stretch occupies residues 255–280; sequence LSDMRADYETLAEKNRRDAELWFNQK.

The protein belongs to the intermediate filament family. Heterotetramer of two type I and two type II keratins.

This Xenopus laevis (African clawed frog) protein is Keratin, type I cytoskeletal 47 kDa (xk81b1).